The primary structure comprises 372 residues: Histidinol-phosphate aminotransferase (372 aa).

Residue Lys234 is modified to N6-(pyridoxal phosphate)lysine.

This sequence belongs to the class-II pyridoxal-phosphate-dependent aminotransferase family. Histidinol-phosphate aminotransferase subfamily. As to quaternary structure, homodimer. It depends on pyridoxal 5'-phosphate as a cofactor.

It carries out the reaction L-histidinol phosphate + 2-oxoglutarate = 3-(imidazol-4-yl)-2-oxopropyl phosphate + L-glutamate. The protein operates within amino-acid biosynthesis; L-histidine biosynthesis; L-histidine from 5-phospho-alpha-D-ribose 1-diphosphate: step 7/9. The polypeptide is Histidinol-phosphate aminotransferase (hisC) (Corynebacterium efficiens (strain DSM 44549 / YS-314 / AJ 12310 / JCM 11189 / NBRC 100395)).